The chain runs to 125 residues: Protein ApaG (125 aa).

In terms of domain architecture, ApaG spans 1–125 (MNDTPRVCVQ…FRLAIATHIH (125 aa)).

In Erwinia tasmaniensis (strain DSM 17950 / CFBP 7177 / CIP 109463 / NCPPB 4357 / Et1/99), this protein is Protein ApaG.